Consider the following 557-residue polypeptide: E3 ubiquitin-protein ligase ARIH1 (557 aa).

The span at 1 to 47 shows a compositional bias: acidic residues; sequence MDSDEGYNYEFDEDEECSEEDSGAEEEEDEDDDEPDDDTLDLGEVEL. The interval 1–95 is disordered; sequence MDSDEGYNYE…GGGGGPGHEQ (95 aa). The span at 65–92 shows a compositional bias: gly residues; the sequence is ETGGGGGSALGPGGGGGGGGGGGGGGPG. Residues 105-153 are UBA-like; that stretch reads TAEQILQHMVECIREVNEVIQNPATITRILLSHFNWDKEKLMERYFDGN. Residue K142 is modified to N6-acetyllysine. Positions 182–393 are TRIAD supradomain; it reads QDMPCQICYL…SAWYNCNRYN (212 aa). Residues C186, C189, C203, H205, C208, C211, C231, C236, C276, C281, C297, C299, C304, C307, H312, C317, C344, and C347 each contribute to the Zn(2+) site. The RING-type 1 zinc-finger motif lies at 186–236; that stretch reads CQICYLNYPNSYFTGLECGHKFCMQCWSEYLTTKIMEEGMGQTISCPAHGC. The IBR-type zinc finger occupies 256-317; it reads LKYQHLITNS…GENWHDPVKC (62 aa). The segment at 344 to 375 adopts an RING-type 2; atypical zinc-finger fold; it reads CPKCHVTIEKDGGCNHMVCRNQNCKAEFCWVC. C357 is an active-site residue. Zn(2+) contacts are provided by C362, C367, C372, C375, H382, and C389. Residues 408 to 557 are ariadne domain; it reads RAALQRYLFY…EKDLWEYIED (150 aa).

The protein belongs to the RBR family. Ariadne subfamily. In terms of assembly, interacts (via the first RING-type zinc finger) with UBE2L3. Associates with cullin-RING ubiquitin ligase (CRL) complexes containing CUL1, CUL2 and CUL3. Interacts with neddylated CUL1. Interacts with neddylated CUL2. Interacts with neddylated CUL3. Interacts with neddylated CUL4A. Widely expressed.

The protein localises to the cytoplasm. Its subcellular location is the nucleus. It is found in the cajal body. It carries out the reaction [E2 ubiquitin-conjugating enzyme]-S-ubiquitinyl-L-cysteine + [acceptor protein]-L-lysine = [E2 ubiquitin-conjugating enzyme]-L-cysteine + [acceptor protein]-N(6)-ubiquitinyl-L-lysine.. Its pathway is protein modification; protein ubiquitination. With respect to regulation, autoinhibited by the ariadne domain, which masks the second RING-type zinc finger that contains the active site and inhibits the E3 activity. Inhibition is relieved upon binding to neddylated cullin-RING ubiquitin ligase complexes, which activate the E3 ligase activity of ARIH1. In terms of biological role, E3 ubiquitin-protein ligase, which catalyzes ubiquitination of target proteins together with ubiquitin-conjugating enzyme E2 UBE2L3. Acts as an atypical E3 ubiquitin-protein ligase by working together with cullin-RING ubiquitin ligase (CRL) complexes and initiating ubiquitination of CRL substrates: associates with CRL complexes and specifically mediates addition of the first ubiquitin on CRLs targets. The initial ubiquitin is then elongated by CDC34/UBE2R1 and UBE2R2. E3 ubiquitin-protein ligase activity is activated upon binding to neddylated cullin-RING ubiquitin ligase complexes. Plays a role in protein translation in response to DNA damage by mediating ubiquitination of EIF4E2, the consequences of EIF4E2 ubiquitination are however unclear. According to a report, EIF4E2 ubiquitination leads to promote EIF4E2 cap-binding and protein translation arrest. According to another report EIF4E2 ubiquitination leads to its subsequent degradation. Acts as the ligase involved in ISGylation of EIF4E2. In vitro, controls the degradation of the LINC (LInker of Nucleoskeleton and Cytoskeleton) complex member SUN2 and may therefore have a role in the formation and localization of the LINC complex, and as a consequence, nuclear subcellular localization and nuclear morphology. This is E3 ubiquitin-protein ligase ARIH1 from Homo sapiens (Human).